We begin with the raw amino-acid sequence, 155 residues long: Ribosome maturation factor RimP (155 aa).

The protein belongs to the RimP family.

Its subcellular location is the cytoplasm. Required for maturation of 30S ribosomal subunits. The chain is Ribosome maturation factor RimP from Maridesulfovibrio salexigens (strain ATCC 14822 / DSM 2638 / NCIMB 8403 / VKM B-1763) (Desulfovibrio salexigens).